Consider the following 116-residue polypeptide: Ribonuclease P protein component (116 aa).

This sequence belongs to the RnpA family. Consists of a catalytic RNA component (M1 or rnpB) and a protein subunit.

It catalyses the reaction Endonucleolytic cleavage of RNA, removing 5'-extranucleotides from tRNA precursor.. Functionally, RNaseP catalyzes the removal of the 5'-leader sequence from pre-tRNA to produce the mature 5'-terminus. It can also cleave other RNA substrates such as 4.5S RNA. The protein component plays an auxiliary but essential role in vivo by binding to the 5'-leader sequence and broadening the substrate specificity of the ribozyme. The polypeptide is Ribonuclease P protein component (Lachnoclostridium phytofermentans (strain ATCC 700394 / DSM 18823 / ISDg) (Clostridium phytofermentans)).